The chain runs to 86 residues: Collagen alpha-1(XII) chain (86 aa).

The span at N1 to P12 shows a compositional bias: pro residues. Residues N1–R86 are disordered. Hydroxyproline is present on residues P6, P9, P12, P18, P24, P27, P30, P42, P51, P54, P65, P74, P77, and P80. Over residues G16–G25 the composition is skewed to gly residues. Positions P35 to L50 are enriched in low complexity. Residues Q57–R71 show a composition bias toward low complexity.

The protein belongs to the fibril-associated collagens with interrupted helices (FACIT) family. In terms of assembly, trimer of identical chains each containing 190 kDa of non-triple-helical sequences. In terms of processing, the triple-helical tail is stabilized by disulfide bonds at each end. Prolines at the third position of the tripeptide repeating unit (G-X-Y) are hydroxylated in some or all of the chains.

Its subcellular location is the secreted. It localises to the extracellular space. It is found in the extracellular matrix. In terms of biological role, type XII collagen interacts with type I collagen-containing fibrils, the COL1 domain could be associated with the surface of the fibrils, and the COL2 and NC3 domains may be localized in the perifibrillar matrix. This is Collagen alpha-1(XII) chain (COL12A1) from Bos taurus (Bovine).